The primary structure comprises 312 residues: Porphobilinogen deaminase (312 aa).

Residue Cys241 is modified to S-(dipyrrolylmethanemethyl)cysteine.

This sequence belongs to the HMBS family. Monomer. Dipyrromethane is required as a cofactor.

The enzyme catalyses 4 porphobilinogen + H2O = hydroxymethylbilane + 4 NH4(+). Its pathway is porphyrin-containing compound metabolism; protoporphyrin-IX biosynthesis; coproporphyrinogen-III from 5-aminolevulinate: step 2/4. Functionally, tetrapolymerization of the monopyrrole PBG into the hydroxymethylbilane pre-uroporphyrinogen in several discrete steps. In Pelotomaculum thermopropionicum (strain DSM 13744 / JCM 10971 / SI), this protein is Porphobilinogen deaminase.